We begin with the raw amino-acid sequence, 123 residues long: Histone H2B.3 (123 aa).

The disordered stretch occupies residues 1–30 (MPPKVSGKAAKKAGKAQKNISKGDKKKNRK). O-linked (GlcNAc) serine glycosylation is present at Ser110. Lys118 is covalently cross-linked (Glycyl lysine isopeptide (Lys-Gly) (interchain with G-Cter in ubiquitin)).

It belongs to the histone H2B family. The nucleosome is a histone octamer containing two molecules each of H2A, H2B, H3 and H4 assembled in one H3-H4 heterotetramer and two H2A-H2B heterodimers. The octamer wraps approximately 147 bp of DNA. Post-translationally, monoubiquitination of Lys-118 gives a specific tag for epigenetic transcriptional activation and is also prerequisite for histone H3 'Lys-4' and 'Lys-79' methylation. GlcNAcylation at Ser-110 promotes monoubiquitination of Lys-118. It fluctuates in response to extracellular glucose, and associates with transcribed genes.

It localises to the nucleus. It is found in the chromosome. Core component of nucleosome. Nucleosomes wrap and compact DNA into chromatin, limiting DNA accessibility to the cellular machineries which require DNA as a template. Histones thereby play a central role in transcription regulation, DNA repair, DNA replication and chromosomal stability. DNA accessibility is regulated via a complex set of post-translational modifications of histones, also called histone code, and nucleosome remodeling. This Tigriopus californicus (Marine copepod) protein is Histone H2B.3.